A 602-amino-acid chain; its full sequence is DNA damage-binding protein CMR1 (602 aa).

Residues 35–85 (KEVDNKSFSSPSSQKRRKTTKKPVIKKEISEPSRRSRRIAGIKSELEDPKQ) form a disordered region. Residues 48–58 (QKRRKTTKKPV) show a composition bias toward basic residues. Basic and acidic residues predominate over residues 59–68 (IKKEISEPSR). WD repeat units follow at residues 229 to 270 (ICHN…NDTK), 291 to 328 (RNVS…STEL), 390 to 430 (LHDK…KSVY), 446 to 484 (NSRL…KLDN), 526 to 569 (GRWV…LAHL), and 571 to 602 (EQVG…YLFE).

Belongs to the WD repeat DDB2/WDR76 family.

Functionally, DNA-binding protein that binds to both single- and double-stranded DNA. Binds preferentially to UV-damaged DNA. May be involved in DNA-metabolic processes. This chain is DNA damage-binding protein CMR1, found in Candida albicans (strain SC5314 / ATCC MYA-2876) (Yeast).